The chain runs to 1462 residues: DNA polymerase alpha catalytic subunit (1462 aa).

2 disordered regions span residues 1-33 and 98-123; these read MAPV…GRQE and DLED…KRNV. Over residues 20-29 the composition is skewed to basic residues; it reads RARREKKSKK. A compositionally biased stretch (basic and acidic residues) spans 106–116; sequence ADEKGKDGKAR. Residue T174 is modified to Phosphothreonine. A phosphoserine mark is found at S186, S190, and S209. At K224 the chain carries N6-acetyllysine. The disordered stretch occupies residues 232-251; sequence DVQVESTEEEQESGAMEFED. T406 bears the Phosphothreonine mark. The tract at residues 650–715 is DNA-binding; sequence RINVCKAPHW…YHLSELVQQI (66 aa). K970 bears the N6-succinyllysine mark. Residues 1245–1376 form a DNA-binding region; it reads QFRVHHYHKD…TGPLCPACMK (132 aa). Zn(2+) is bound by residues C1283, C1286, C1310, C1315, C1348, C1353, C1371, and C1374. The CysA-type zinc finger occupies 1283–1318; sequence CPTCGTENIYDNVFDGSGTDMEPSLYRCSNIDCKAS. Positions 1348–1374 match the CysB motif motif; it reads CEEPTCRNRTRHLPLQFSRTGPLCPAC.

The protein belongs to the DNA polymerase type-B family. Component of the alpha DNA polymerase complex (also known as the alpha DNA polymerase-primase complex) consisting of four subunits: the catalytic subunit POLA1, the regulatory subunit POLA2, and the primase complex subunits PRIM1 and PRIM2 respectively. Interacts with PARP1; this interaction functions as part of the control of replication fork progression. Interacts with MCM10 and WDHD1; these interactions recruit the polymerase alpha complex to the pre-replicative complex bound to DNA. Interacts with RPA1; this interaction stabilizes the replicative complex and reduces the misincorporation rate of DNA polymerase alpha by acting as a fidelity clamp. In terms of assembly, (Microbial infection) Interacts with SV40 Large T antigen; this interaction allows viral DNA replication. As to quaternary structure, (Microbial infection) Interacts with herpes simplex virus 1/HHV-1 replication origin-binding protein UL9. Post-translationally, a 165 kDa form is probably produced by proteolytic cleavage at Lys-124.

The protein resides in the nucleus. It localises to the cytoplasm. Its subcellular location is the cytosol. The enzyme catalyses DNA(n) + a 2'-deoxyribonucleoside 5'-triphosphate = DNA(n+1) + diphosphate. Autoinhibited in apo-primosome, where the zinc motif of POLA1 and oligonucleotide/olicosaccharide-binding domain of POLA2 are placed into the active site blocking RNA:DNA duplex entry. Functionally, catalytic subunit of the DNA polymerase alpha complex (also known as the alpha DNA polymerase-primase complex) which plays an essential role in the initiation of DNA synthesis. During the S phase of the cell cycle, the DNA polymerase alpha complex (composed of a catalytic subunit POLA1, a regulatory subunit POLA2 and two primase subunits PRIM1 and PRIM2) is recruited to DNA at the replicative forks via direct interactions with MCM10 and WDHD1. The primase subunit of the polymerase alpha complex initiates DNA synthesis by oligomerising short RNA primers on both leading and lagging strands. These primers are initially extended by the polymerase alpha catalytic subunit and subsequently transferred to polymerase delta and polymerase epsilon for processive synthesis on the lagging and leading strand, respectively. The reason this transfer occurs is because the polymerase alpha has limited processivity and lacks intrinsic 3' exonuclease activity for proofreading error, and therefore is not well suited for replicating long complexes. In the cytosol, responsible for a substantial proportion of the physiological concentration of cytosolic RNA:DNA hybrids, which are necessary to prevent spontaneous activation of type I interferon responses. This chain is DNA polymerase alpha catalytic subunit (POLA1), found in Homo sapiens (Human).